A 220-amino-acid chain; its full sequence is Ribosomal RNA small subunit methyltransferase G (220 aa).

S-adenosyl-L-methionine-binding positions include Gly-78, Phe-83, 129–130 (GE), and Arg-146.

It belongs to the methyltransferase superfamily. RNA methyltransferase RsmG family.

It localises to the cytoplasm. It catalyses the reaction guanosine(527) in 16S rRNA + S-adenosyl-L-methionine = N(7)-methylguanosine(527) in 16S rRNA + S-adenosyl-L-homocysteine. Functionally, specifically methylates the N7 position of guanine in position 527 of 16S rRNA. This chain is Ribosomal RNA small subunit methyltransferase G, found in Geobacter metallireducens (strain ATCC 53774 / DSM 7210 / GS-15).